The following is a 60-amino-acid chain: Large ribosomal subunit protein bL32 (60 aa).

Residues 1-23 (MAVPARHTSKAKKNKRRTHYKLT) form a disordered region. Positions 7 to 20 (HTSKAKKNKRRTHY) are enriched in basic residues.

Belongs to the bacterial ribosomal protein bL32 family.

The sequence is that of Large ribosomal subunit protein bL32 from Streptococcus equi subsp. equi (strain 4047).